The primary structure comprises 601 residues: Elongation factor 4 (601 aa).

The 183-residue stretch at 7-189 folds into the tr-type G domain; it reads SLIRNFSIIA…ALVTRLPPPV (183 aa). GTP contacts are provided by residues 19–24 and 136–139; these read DHGKST and NKVD.

It belongs to the TRAFAC class translation factor GTPase superfamily. Classic translation factor GTPase family. LepA subfamily.

It is found in the cell inner membrane. It carries out the reaction GTP + H2O = GDP + phosphate + H(+). Functionally, required for accurate and efficient protein synthesis under certain stress conditions. May act as a fidelity factor of the translation reaction, by catalyzing a one-codon backward translocation of tRNAs on improperly translocated ribosomes. Back-translocation proceeds from a post-translocation (POST) complex to a pre-translocation (PRE) complex, thus giving elongation factor G a second chance to translocate the tRNAs correctly. Binds to ribosomes in a GTP-dependent manner. The protein is Elongation factor 4 of Gluconacetobacter diazotrophicus (strain ATCC 49037 / DSM 5601 / CCUG 37298 / CIP 103539 / LMG 7603 / PAl5).